A 110-amino-acid polypeptide reads, in one-letter code: Large ribosomal subunit protein uL22 (110 aa).

Belongs to the universal ribosomal protein uL22 family. In terms of assembly, part of the 50S ribosomal subunit.

Its function is as follows. This protein binds specifically to 23S rRNA; its binding is stimulated by other ribosomal proteins, e.g. L4, L17, and L20. It is important during the early stages of 50S assembly. It makes multiple contacts with different domains of the 23S rRNA in the assembled 50S subunit and ribosome. Functionally, the globular domain of the protein is located near the polypeptide exit tunnel on the outside of the subunit, while an extended beta-hairpin is found that lines the wall of the exit tunnel in the center of the 70S ribosome. In Buchnera aphidicola subsp. Schizaphis graminum (strain Sg), this protein is Large ribosomal subunit protein uL22.